Reading from the N-terminus, the 840-residue chain is MGLFDKIFGSYSDREVKRITPIVDKIDSLGPEMEKLSDEELKQKTFEFKDRYAKGESLDDMLPEAFAVCREASTRVLGMKHYREQLIGGIVLHQGRIAEMKTGEGKTLVATLPVYLNAIAGKGVHVITVNDYLATRDKEWMGQLYEFLGLTTGVIVHGLTNDQRREAYNADITYGTNNEFGFDYLRDNMVIYKEERVQRPLHYCIVDEVDSILIDEARTPLIISGAGSKSTDLYKIADFFVKKLREEEDYTIDEKAHAAMLTDKGVAEAEKAFGIENYADANNMELQHHITQALKANYVMKRDKDYMVKDDEIAIVDEFTGRLMEGRRYSDGLHQAIEAKEGVKVQRESKTLATITFQNYFRMYTKLAGMTGTALTEETEFREIYGLDVVVIPTHRPVQRQDHSDLVFKTAKGKYDAIVEEIIETHKTGQPVLVGTTSIEKSEYLSSLLKKKGVPHKVLNARYHEQEAEIVSHAGELGNITIATNMAGRGTDIKLGEGVLEVGGLKIIGTERHESRRIDNQLRGRSGRQGDKGHSRFYISLEDDLMRIFGSEKLQAVVDRLGLEETEAIESKMVTKSIENAQKKVEGNNFDIRKTLLGYDDVMNKQREVIYKQRSQVLEGENLEDSVQAMIEDVITNAVQAHLGNIDEDDFEKELGDLIKYLEDIMLPHGKFTVEELKTNSNEEITRKFIECAREIYKEKEEFVGSEQMREIERVIILRVVDTKWMDHIDDMDHLKQGIGLRAYKQQDPIQAYQMEGSAMFDEMINNIKIDTVRYLFHVKVEAEKPQRERVAKETGASHGGDSQEIKKKPVKKEPKVGRNDLCPCGSGKKYKSCCGREVV.

ATP-binding positions include glutamine 85, 103–107, and aspartate 492; that span reads GEGKT. A disordered region spans residues 787–821; that stretch reads QRERVAKETGASHGGDSQEIKKKPVKKEPKVGRND. The segment covering 802–819 has biased composition (basic and acidic residues); sequence DSQEIKKKPVKKEPKVGR. 4 residues coordinate Zn(2+): cysteine 823, cysteine 825, cysteine 834, and cysteine 835.

Belongs to the SecA family. Monomer and homodimer. Part of the essential Sec protein translocation apparatus which comprises SecA, SecYEG and auxiliary proteins SecDF. Other proteins may also be involved. The cofactor is Zn(2+).

It localises to the cell membrane. The protein localises to the cytoplasm. It catalyses the reaction ATP + H2O + cellular proteinSide 1 = ADP + phosphate + cellular proteinSide 2.. Functionally, part of the Sec protein translocase complex. Interacts with the SecYEG preprotein conducting channel. Has a central role in coupling the hydrolysis of ATP to the transfer of proteins into and across the cell membrane, serving as an ATP-driven molecular motor driving the stepwise translocation of polypeptide chains across the membrane. The protein is Protein translocase subunit SecA of Clostridium perfringens (strain SM101 / Type A).